The primary structure comprises 306 residues: Putative secretory carrier-associated membrane protein 1 (306 aa).

The disordered stretch occupies residues 1 to 60 (MAGRYDSNPFEEDDVNPFSEQARGKAGGQPSYGGGAFYMPNPRNVPSMSSNSRLSPLPPE). Residues 1–141 (MAGRYDSNPF…EIPSHLQRMQ (141 aa)) are Cytoplasmic-facing. Residues 25–36 (KAGGQPSYGGGA) are compositionally biased toward gly residues. Residues 44-54 (NVPSMSSNSRL) are compositionally biased toward polar residues. Residues 72–109 (LDSSKDLKNREKELQAREAELNKREKELKRREEAAARA) are a coiled coil. 4 consecutive transmembrane segments (helical) span residues 142–162 (YVAF…VIAV), 174–194 (IWLL…VLWY), 209–229 (FGLF…SAVA), and 257–277 (IFYF…IWVI). The Cytoplasmic portion of the chain corresponds to 278–306 (QQVYMYFRGSGKAAEMKRDATRGAMRAAF).

The protein belongs to the SCAMP family.

It is found in the cell membrane. Its subcellular location is the cytoplasmic vesicle. The protein localises to the secretory vesicle membrane. Functionally, probably involved in membrane trafficking. This is Putative secretory carrier-associated membrane protein 1 (SCAMP1) from Oryza sativa subsp. indica (Rice).